Consider the following 364-residue polypeptide: Phosphoserine aminotransferase (364 aa).

L-glutamate is bound at residue Arg42. Residues 76–77, Trp100, Thr150, Asp169, and Gln192 each bind pyridoxal 5'-phosphate; that span reads AS. The residue at position 193 (Lys193) is an N6-(pyridoxal phosphate)lysine. 234 to 235 is a binding site for pyridoxal 5'-phosphate; it reads NT.

This sequence belongs to the class-V pyridoxal-phosphate-dependent aminotransferase family. SerC subfamily. As to quaternary structure, homodimer. Pyridoxal 5'-phosphate serves as cofactor.

The protein resides in the cytoplasm. The enzyme catalyses O-phospho-L-serine + 2-oxoglutarate = 3-phosphooxypyruvate + L-glutamate. The catalysed reaction is 4-(phosphooxy)-L-threonine + 2-oxoglutarate = (R)-3-hydroxy-2-oxo-4-phosphooxybutanoate + L-glutamate. The protein operates within amino-acid biosynthesis; L-serine biosynthesis; L-serine from 3-phospho-D-glycerate: step 2/3. Its function is as follows. Catalyzes the reversible conversion of 3-phosphohydroxypyruvate to phosphoserine and of 3-hydroxy-2-oxo-4-phosphonooxybutanoate to phosphohydroxythreonine. The chain is Phosphoserine aminotransferase from Shouchella clausii (strain KSM-K16) (Alkalihalobacillus clausii).